A 72-amino-acid chain; its full sequence is Crustacean hyperglycemic hormone (72 aa).

Q1 is subject to Pyrrolidone carboxylic acid. F3 bears the D-phenylalanine; in form CHH-II mark. 3 disulfide bridges follow: C7-C43, C23-C39, and C26-C52. Residue V72 is modified to Valine amide.

In terms of processing, stereoinversion of L-Phe (in CHH-I) to D-Phe (in CHH-II) the two forms are present in a ratio 3:1 (CHH-I/CHH-II). In terms of tissue distribution, produced by the medulla terminalis X-organ in the eyestalks and transported to the sinus gland where they are stored and released.

It is found in the secreted. Functionally, hormone found in the sinus gland of isopods and decapods which controls the blood sugar level. Has a secretagogue action over the amylase released from the midgut gland. May act as a stress hormone and may be involved in the control of molting and reproduction. The sequence is that of Crustacean hyperglycemic hormone from Procambarus bouvieri (Mexican crayfish).